The following is a 153-amino-acid chain: Fucose mutarotase (153 aa).

Catalysis depends on His24, which acts as the Proton donor. Asp32 is a binding site for substrate. Residue Asp69 is part of the active site. Positions 79, 120, 138, and 140 each coordinate substrate. Tyr120 is a catalytic residue.

It belongs to the RbsD / FucU family. In terms of assembly, mainly homodimer, but also exists as homotetramer, homooctamer, and homodecamer. The homodimeric form seems catalytically inactive. In terms of tissue distribution, widely expressed in various tissues and cell lines, including kidney, liver, and pancreas, marginally in muscle and testis.

The catalysed reaction is alpha-L-fucose = beta-L-fucose. It participates in carbohydrate metabolism; L-fucose metabolism. Involved in the interconversion between alpha- and beta-L-fucoses. L-Fucose (6-deoxy-L-galactose) exists as alpha-L-fucose (29.5%) and beta-L-fucose (70.5%), the beta-form is metabolized through the salvage pathway. GDP-L-fucose formed either by the de novo or salvage pathways is transported into the endoplasmic reticulum, where it serves as a substrate for N- and O-glycosylations by fucosyltransferases. Fucosylated structures expressed on cell surfaces or secreted in biological fluids are believed to play a critical role in cell-cell adhesion and recognition processes. The protein is Fucose mutarotase (Fuom) of Mus musculus (Mouse).